The chain runs to 546 residues: Chaperonin GroEL (546 aa).

ATP is bound by residues 29–32 (TMGP), Lys50, 86–90 (DGTTT), Gly414, and Asp492.

Belongs to the chaperonin (HSP60) family. Forms a cylinder of 14 subunits composed of two heptameric rings stacked back-to-back. Interacts with the co-chaperonin GroES.

Its subcellular location is the cytoplasm. The catalysed reaction is ATP + H2O + a folded polypeptide = ADP + phosphate + an unfolded polypeptide.. Together with its co-chaperonin GroES, plays an essential role in assisting protein folding. The GroEL-GroES system forms a nano-cage that allows encapsulation of the non-native substrate proteins and provides a physical environment optimized to promote and accelerate protein folding. In Helicobacter pylori (strain Shi470), this protein is Chaperonin GroEL.